The following is a 486-amino-acid chain: N-succinylglutamate 5-semialdehyde dehydrogenase (486 aa).

An NAD(+)-binding site is contributed by 220–225 (GSSRTG). Catalysis depends on residues Glu243 and Cys277.

The protein belongs to the aldehyde dehydrogenase family. AstD subfamily.

The enzyme catalyses N-succinyl-L-glutamate 5-semialdehyde + NAD(+) + H2O = N-succinyl-L-glutamate + NADH + 2 H(+). The protein operates within amino-acid degradation; L-arginine degradation via AST pathway; L-glutamate and succinate from L-arginine: step 4/5. Functionally, catalyzes the NAD-dependent reduction of succinylglutamate semialdehyde into succinylglutamate. This chain is N-succinylglutamate 5-semialdehyde dehydrogenase, found in Shewanella putrefaciens (strain CN-32 / ATCC BAA-453).